We begin with the raw amino-acid sequence, 379 residues long: Homoserine O-succinyltransferase (379 aa).

The 310-residue stretch at 48 to 357 (NAVLICHALS…SAHGHDAFLM (310 aa)) folds into the AB hydrolase-1 domain. Residue serine 154 is the Nucleophile of the active site. Arginine 224 contributes to the substrate binding site. Active-site residues include aspartate 319 and histidine 352. Residue aspartate 353 participates in substrate binding.

This sequence belongs to the AB hydrolase superfamily. MetX family. Homodimer.

The protein localises to the cytoplasm. It carries out the reaction L-homoserine + succinyl-CoA = O-succinyl-L-homoserine + CoA. Its pathway is amino-acid biosynthesis; L-methionine biosynthesis via de novo pathway; O-succinyl-L-homoserine from L-homoserine: step 1/1. Transfers a succinyl group from succinyl-CoA to L-homoserine, forming succinyl-L-homoserine. The chain is Homoserine O-succinyltransferase from Neisseria gonorrhoeae (strain ATCC 700825 / FA 1090).